A 279-amino-acid chain; its full sequence is MADS-box transcription factor PHERES 1 (279 aa).

One can recognise an MADS-box domain in the interval 1 to 60 (MRGKMKLSFIENDSVRKTTFTKRKKGMLKKFNELVTLCGVDACAVIRSPYNSIQEPWPSR).

Interacts with AGL61/DIANA and AGL62. In terms of tissue distribution, male gametophyte, embryo and endosperm.

The protein localises to the nucleus. Its function is as follows. Probable transcription factor involved in the development of gametophytes and seeds. The polypeptide is MADS-box transcription factor PHERES 1 (PHE1) (Arabidopsis thaliana (Mouse-ear cress)).